The sequence spans 195 residues: ATP-dependent Clp protease proteolytic subunit (195 aa).

Ser-98 functions as the Nucleophile in the catalytic mechanism. The active site involves His-123.

Belongs to the peptidase S14 family. Fourteen ClpP subunits assemble into 2 heptameric rings which stack back to back to give a disk-like structure with a central cavity, resembling the structure of eukaryotic proteasomes.

The protein resides in the cytoplasm. The catalysed reaction is Hydrolysis of proteins to small peptides in the presence of ATP and magnesium. alpha-casein is the usual test substrate. In the absence of ATP, only oligopeptides shorter than five residues are hydrolyzed (such as succinyl-Leu-Tyr-|-NHMec, and Leu-Tyr-Leu-|-Tyr-Trp, in which cleavage of the -Tyr-|-Leu- and -Tyr-|-Trp bonds also occurs).. Its function is as follows. Cleaves peptides in various proteins in a process that requires ATP hydrolysis. Has a chymotrypsin-like activity. Plays a major role in the degradation of misfolded proteins. This chain is ATP-dependent Clp protease proteolytic subunit, found in Helicobacter pylori (strain Shi470).